The primary structure comprises 603 residues: Penicillin-binding protein activator LpoA (603 aa).

The signal sequence occupies residues Met1–Ala24. The N-palmitoyl cysteine moiety is linked to residue Cys25. The S-diacylglycerol cysteine moiety is linked to residue Cys25.

This sequence belongs to the LpoA family. Interacts with PBP1a.

It is found in the cell outer membrane. Functionally, regulator of peptidoglycan synthesis that is essential for the function of penicillin-binding protein 1A (PBP1a). This is Penicillin-binding protein activator LpoA from Vibrio antiquarius (strain Ex25).